Here is a 474-residue protein sequence, read N- to C-terminus: Aspartyl/glutamyl-tRNA(Asn/Gln) amidotransferase subunit B (474 aa).

It belongs to the GatB/GatE family. GatB subfamily. As to quaternary structure, heterotrimer of A, B and C subunits.

It catalyses the reaction L-glutamyl-tRNA(Gln) + L-glutamine + ATP + H2O = L-glutaminyl-tRNA(Gln) + L-glutamate + ADP + phosphate + H(+). It carries out the reaction L-aspartyl-tRNA(Asn) + L-glutamine + ATP + H2O = L-asparaginyl-tRNA(Asn) + L-glutamate + ADP + phosphate + 2 H(+). Functionally, allows the formation of correctly charged Asn-tRNA(Asn) or Gln-tRNA(Gln) through the transamidation of misacylated Asp-tRNA(Asn) or Glu-tRNA(Gln) in organisms which lack either or both of asparaginyl-tRNA or glutaminyl-tRNA synthetases. The reaction takes place in the presence of glutamine and ATP through an activated phospho-Asp-tRNA(Asn) or phospho-Glu-tRNA(Gln). The sequence is that of Aspartyl/glutamyl-tRNA(Asn/Gln) amidotransferase subunit B from Campylobacter curvus (strain 525.92).